Consider the following 882-residue polypeptide: DNA mismatch repair protein MutS (882 aa).

An ATP-binding site is contributed by 626–633 (GPNMAGKS).

The protein belongs to the DNA mismatch repair MutS family.

In terms of biological role, this protein is involved in the repair of mismatches in DNA. It is possible that it carries out the mismatch recognition step. This protein has a weak ATPase activity. The polypeptide is DNA mismatch repair protein MutS (Anaeromyxobacter sp. (strain Fw109-5)).